Reading from the N-terminus, the 995-residue chain is S1 RNA-binding domain-containing protein 1 (995 aa).

The interval 23-81 (SFSELSSASEEDDKEDSAWEPQKKVPRSRKQPPPKESKPKRMPRVKKNAPQISDGSEVV) is disordered. Glycyl lysine isopeptide (Lys-Gly) (interchain with G-Cter in SUMO2) cross-links involve residues Lys-84 and Lys-134. The disordered stretch occupies residues 120 to 165 (CAAQPHTVRRTKKLKVEEETSKASNLEGESNSSETPSTSTVWGGTC). The segment covering 146–159 (EGESNSSETPSTST) has biased composition (low complexity). Glycyl lysine isopeptide (Lys-Gly) (interchain with G-Cter in SUMO2) cross-links involve residues Lys-166, Lys-167, and Lys-183. Residue Lys-185 forms a Glycyl lysine isopeptide (Lys-Gly) (interchain with G-Cter in SUMO1); alternate linkage. Lys-185 participates in a covalent cross-link: Glycyl lysine isopeptide (Lys-Gly) (interchain with G-Cter in SUMO2); alternate. Residues 258 to 288 (ADSLREVQQTLEELRAVAKKVHSTIQKIKKE) adopt a coiled-coil conformation. Residue Ser-861 is modified to Phosphoserine. The region spanning 919 to 992 (GTVLTGKVEN…PRSRITLDLI (74 aa)) is the S1 motif domain. Lys-955 participates in a covalent cross-link: Glycyl lysine isopeptide (Lys-Gly) (interchain with G-Cter in SUMO2). Ser-964 bears the Phosphoserine mark.

In Homo sapiens (Human), this protein is S1 RNA-binding domain-containing protein 1 (SRBD1).